A 76-amino-acid chain; its full sequence is Small ribosomal subunit protein bS18 (76 aa).

It belongs to the bacterial ribosomal protein bS18 family. Part of the 30S ribosomal subunit. Forms a tight heterodimer with protein bS6.

Its function is as follows. Binds as a heterodimer with protein bS6 to the central domain of the 16S rRNA, where it helps stabilize the platform of the 30S subunit. This chain is Small ribosomal subunit protein bS18, found in Aeromonas salmonicida (strain A449).